We begin with the raw amino-acid sequence, 156 residues long: Hemerythrin-like protein (156 aa).

Positions 54, 84, 88, 109, 113, 142, and 147 each coordinate Fe cation.

It belongs to the hemerythrin family.

Oxygen-binding protein. The oxygen-binding site contains two iron atoms. The chain is Hemerythrin-like protein from Nematostella vectensis (Starlet sea anemone).